The sequence spans 901 residues: Probable inorganic carbon transporter subunit DabA (901 aa).

Zn(2+) contacts are provided by C424, D426, H606, and C621.

Belongs to the inorganic carbon transporter (TC 9.A.2) DabA family. Forms a complex with DabB. The cofactor is Zn(2+).

It is found in the cell membrane. Functionally, part of an energy-coupled inorganic carbon pump. The sequence is that of Probable inorganic carbon transporter subunit DabA from Staphylococcus aureus (strain NCTC 8325 / PS 47).